We begin with the raw amino-acid sequence, 171 residues long: Ribosome maturation factor RimM (171 aa).

The 75-residue stretch at 96–170 folds into the PRC barrel domain; sequence PDSYYHFQLE…TMTVRLPDGL (75 aa).

Belongs to the RimM family. Binds ribosomal protein uS19.

It localises to the cytoplasm. Its function is as follows. An accessory protein needed during the final step in the assembly of 30S ribosomal subunit, possibly for assembly of the head region. Essential for efficient processing of 16S rRNA. May be needed both before and after RbfA during the maturation of 16S rRNA. It has affinity for free ribosomal 30S subunits but not for 70S ribosomes. In Heliobacterium modesticaldum (strain ATCC 51547 / Ice1), this protein is Ribosome maturation factor RimM.